A 448-amino-acid polypeptide reads, in one-letter code: Phosphoglucosamine mutase (448 aa).

The active-site Phosphoserine intermediate is the Ser108. Residues Ser108, Asp247, Asp249, and Asp251 each coordinate Mg(2+). Position 108 is a phosphoserine (Ser108).

This sequence belongs to the phosphohexose mutase family. It depends on Mg(2+) as a cofactor. Activated by phosphorylation.

The catalysed reaction is alpha-D-glucosamine 1-phosphate = D-glucosamine 6-phosphate. Functionally, catalyzes the conversion of glucosamine-6-phosphate to glucosamine-1-phosphate. This Herminiimonas arsenicoxydans protein is Phosphoglucosamine mutase.